The following is a 253-amino-acid chain: Imidazole glycerol phosphate synthase subunit HisF (253 aa).

Active-site residues include Asp11 and Asp130.

The protein belongs to the HisA/HisF family. As to quaternary structure, heterodimer of HisH and HisF.

The protein localises to the cytoplasm. It catalyses the reaction 5-[(5-phospho-1-deoxy-D-ribulos-1-ylimino)methylamino]-1-(5-phospho-beta-D-ribosyl)imidazole-4-carboxamide + L-glutamine = D-erythro-1-(imidazol-4-yl)glycerol 3-phosphate + 5-amino-1-(5-phospho-beta-D-ribosyl)imidazole-4-carboxamide + L-glutamate + H(+). Its pathway is amino-acid biosynthesis; L-histidine biosynthesis; L-histidine from 5-phospho-alpha-D-ribose 1-diphosphate: step 5/9. Functionally, IGPS catalyzes the conversion of PRFAR and glutamine to IGP, AICAR and glutamate. The HisF subunit catalyzes the cyclization activity that produces IGP and AICAR from PRFAR using the ammonia provided by the HisH subunit. This Gluconobacter oxydans (strain 621H) (Gluconobacter suboxydans) protein is Imidazole glycerol phosphate synthase subunit HisF.